Here is a 39-residue protein sequence, read N- to C-terminus: Photosystem II reaction center protein J (39 aa).

Residues 7–27 traverse the membrane as a helical segment; it reads IPLWIVAVVVGLGVVTVVGLF.

It belongs to the PsbJ family. PSII is composed of 1 copy each of membrane proteins PsbA, PsbB, PsbC, PsbD, PsbE, PsbF, PsbH, PsbI, PsbJ, PsbK, PsbL, PsbM, PsbT, PsbX, PsbY, PsbZ, Psb30/Ycf12, peripheral proteins PsbO, CyanoQ (PsbQ), PsbU, PsbV and a large number of cofactors. It forms dimeric complexes.

Its subcellular location is the cellular thylakoid membrane. Functionally, one of the components of the core complex of photosystem II (PSII). PSII is a light-driven water:plastoquinone oxidoreductase that uses light energy to abstract electrons from H(2)O, generating O(2) and a proton gradient subsequently used for ATP formation. It consists of a core antenna complex that captures photons, and an electron transfer chain that converts photonic excitation into a charge separation. This is Photosystem II reaction center protein J from Synechococcus sp. (strain JA-3-3Ab) (Cyanobacteria bacterium Yellowstone A-Prime).